A 152-amino-acid polypeptide reads, in one-letter code: MTVAISAAVQQLPHGQGLALPAYQSAHAAGLDLLAAVAPDAPLVLAPGTYALVPTGLTLALPPGYEAQVRPRSGLAARHGVTVLNAPGTIDADYRGEIGVLLINHGSQPFTVRRGERIAQMVVARVARVDLTVAASLETTERGSGGFGSTGR.

Residues 72-74 (RSG), Asn-85, and 89-91 (TID) each bind substrate.

This sequence belongs to the dUTPase family. It depends on Mg(2+) as a cofactor.

The enzyme catalyses dUTP + H2O = dUMP + diphosphate + H(+). Its pathway is pyrimidine metabolism; dUMP biosynthesis; dUMP from dCTP (dUTP route): step 2/2. This enzyme is involved in nucleotide metabolism: it produces dUMP, the immediate precursor of thymidine nucleotides and it decreases the intracellular concentration of dUTP so that uracil cannot be incorporated into DNA. The polypeptide is Deoxyuridine 5'-triphosphate nucleotidohydrolase (Rhodopseudomonas palustris (strain BisB18)).